A 187-amino-acid polypeptide reads, in one-letter code: Apolipophorin-3 (187 aa).

The N-terminal stretch at 1-17 (MAAKFIILLALFALSQA) is a signal peptide. The propeptide occupies 18–22 (SVVRR).

It belongs to the insect apolipophorin-3 family. In terms of assembly, equilibrium between a soluble monomer and a bound lipoprotein form. Apolipophorin-3 associates with lipophorin during lipid loading until each particle contains 9 or 14 molecules of apolipophorin-3. In terms of tissue distribution, hemolymph.

It localises to the secreted. Assists in the loading of diacylglycerol, generated from triacylglycerol stores in the fat body through the action of adipokinetic hormone, into lipophorin, the hemolymph lipoprotein. It increases the lipid carrying capacity of lipophorin by covering the expanding hydrophobic surface resulting from diacylglycerol uptake. It thus plays a critical role in the transport of lipids during flight in several species of insects. This is Apolipophorin-3 from Hyphantria cunea (Fall webworm moth).